A 764-amino-acid polypeptide reads, in one-letter code: Complement factor B (764 aa).

The signal sequence occupies residues 1–25 (MGSNLSPQLCLMPFILGLLSGGVTT). Sushi domains lie at 35–100 (GSCS…ECRA), 101–160 (IHCP…ICDN), and 163–220 (GYCS…SCQD). Intrachain disulfides connect C37–C76, C62–C98, C103–C145, C131–C158, C165–C205, and C191–C218. N-linked (GlcNAc...) asparagine glycans are attached at residues N122 and N142. The 200-residue stretch at 270–469 (NIYLVLDGSD…NLEDVFYQMI (200 aa)) folds into the VWFA domain. Mg(2+) is bound by residues S278 and S280. N285 is a glycosylation site (N-linked (GlcNAc...) asparagine). T353 lines the Mg(2+) pocket. An N-linked (GlcNAc...) asparagine glycan is attached at N378. The Peptidase S1 domain maps to 477–757 (LCGMVWEHRK…VLPWLKEKLQ (281 aa)). 5 disulfides stabilise this stretch: C478/C596, C511/C527, C599/C615, C656/C682, and C695/C725. Catalysis depends on charge relay system residues H526 and D576. Catalysis depends on S699, which acts as the Charge relay system.

The protein belongs to the peptidase S1 family. Monomer. Interacts with complement C3b; this interaction is dependent on the presence of Mg(2+). In terms of assembly, catalytic component of the C3 convertase of the alternative complement pathway, also named C3bBb, composed of complement factor B Bb and complement C3b. Catalytic component of the C5 convertase of the alternative complement pathway, also named C3bBb3b, composed of complement factor B Bb and additional molecules of complement C3b. Interacts to CFP; this interaction contributes to the stabilization of the active C3-convertase enzyme complex. The cofactor is Mg(2+). It depends on Mn(2+) as a cofactor. Cleaved by CFD following activation of the alternative complement system, generating Ba and Bb chains. Cleavage and activation takes place when CFB is already associated with complement C3b.

It localises to the secreted. It is found in the cell surface. It carries out the reaction Cleavage of Arg-|-Ser bond in complement component C3 alpha-chain to yield C3a and C3b, and Arg-|-Xaa bond in complement component C5 alpha-chain to yield C5a and C5b.. Precursor of the catalytic component of the C3 and C5 convertase complexes of the alternative pathway of the complement system, a cascade of proteins that leads to phagocytosis and breakdown of pathogens and signaling that strengthens the adaptive immune system. The alternative complement pathway acts as an amplification loop that enhances other complement pathways (classical, lectin and GZMK) by promoting formation of additional C3 and C5 convertases. CFB is cleaved and activated by CFD to generate Ba and Bb chains; Bb chain constituting the catalytic component of the C3 and C5 convertases. Its function is as follows. Serine protease component of the complement C3 and C5 convertase complexes of the alternative complement pathway. Following cleavage and activation by factor D (CFD), forms the C3 convertase together with complement C3b. As part of the C3 convertase, cleaves and activates C3 into C3a anaphylatoxin and C3b opsonin, the next components of the complement pathways. When an additional complement C3b molecule binds to the C3 convertase, forms the C5 convertase, which cleaves and activates C5 into C5a anaphylatoxin and C5b component of the membrane attack complex. Functionally, involved in proliferation and differentiation of preactivated B-lymphocytes, rapid spreading of peripheral blood monocytes, stimulation of lymphocyte blastogenesis and lysis of erythrocytes. The polypeptide is Complement factor B (CFB) (Gorilla gorilla gorilla (Western lowland gorilla)).